A 204-amino-acid polypeptide reads, in one-letter code: MTGDKLDASEGLEEASLRFIEDGSLAQEEEGEGFDFFFKKSSFLAATDSSDDEGGASSGDEGEASSDDEGDASSDDEEEASSDGEGVVEDEETLDAEGEDSDEEGEGGMQAVDCKKFFKLKRREILFFMRKFYFGRKVTRSHVHLFLKKLKRKSTLEICNCAANRFIDAASLFFYFFNVSYLNFFIRQGYLYQNFNRIVARPPT.

Residues 47 to 108 form a disordered region; the sequence is TDSSDDEGGA…EDSDEEGEGG (62 aa). The segment covering 49–106 has biased composition (acidic residues); it reads SSDDEGGASSGDEGEASSDDEGDASSDDEEEASSDGEGVVEDEETLDAEGEDSDEEGE.

It is found in the mitochondrion. This is an uncharacterized protein from Paramecium tetraurelia.